Reading from the N-terminus, the 403-residue chain is Acetylornithine/succinyldiaminopimelate aminotransferase (403 aa).

Pyridoxal 5'-phosphate-binding positions include 107–108 (GA) and F140. R143 lines the N(2)-acetyl-L-ornithine pocket. 225-228 (DEVQ) is a pyridoxal 5'-phosphate binding site. The residue at position 254 (K254) is an N6-(pyridoxal phosphate)lysine. T282 contributes to the N(2)-acetyl-L-ornithine binding site. T283 contacts pyridoxal 5'-phosphate.

This sequence belongs to the class-III pyridoxal-phosphate-dependent aminotransferase family. ArgD subfamily. Homodimer. It depends on pyridoxal 5'-phosphate as a cofactor.

The protein localises to the cytoplasm. The enzyme catalyses N(2)-acetyl-L-ornithine + 2-oxoglutarate = N-acetyl-L-glutamate 5-semialdehyde + L-glutamate. The catalysed reaction is N-succinyl-(2S,6S)-2,6-diaminopimelate + 2-oxoglutarate = (S)-2-succinylamino-6-oxoheptanedioate + L-glutamate. It participates in amino-acid biosynthesis; L-arginine biosynthesis; N(2)-acetyl-L-ornithine from L-glutamate: step 4/4. The protein operates within amino-acid biosynthesis; L-lysine biosynthesis via DAP pathway; LL-2,6-diaminopimelate from (S)-tetrahydrodipicolinate (succinylase route): step 2/3. Involved in both the arginine and lysine biosynthetic pathways. The sequence is that of Acetylornithine/succinyldiaminopimelate aminotransferase from Photorhabdus laumondii subsp. laumondii (strain DSM 15139 / CIP 105565 / TT01) (Photorhabdus luminescens subsp. laumondii).